A 418-amino-acid polypeptide reads, in one-letter code: Gamma-glutamyl phosphate reductase (418 aa).

Belongs to the gamma-glutamyl phosphate reductase family.

It localises to the cytoplasm. The catalysed reaction is L-glutamate 5-semialdehyde + phosphate + NADP(+) = L-glutamyl 5-phosphate + NADPH + H(+). The protein operates within amino-acid biosynthesis; L-proline biosynthesis; L-glutamate 5-semialdehyde from L-glutamate: step 2/2. Catalyzes the NADPH-dependent reduction of L-glutamate 5-phosphate into L-glutamate 5-semialdehyde and phosphate. The product spontaneously undergoes cyclization to form 1-pyrroline-5-carboxylate. The protein is Gamma-glutamyl phosphate reductase of Citrifermentans bemidjiense (strain ATCC BAA-1014 / DSM 16622 / JCM 12645 / Bem) (Geobacter bemidjiensis).